Reading from the N-terminus, the 454-residue chain is Trigger factor (454 aa).

The 93-residue stretch at 169 to 261 folds into the PPIase FKBP-type domain; sequence GDVAIADYEG…LKELKSRELP (93 aa).

The protein belongs to the FKBP-type PPIase family. Tig subfamily.

The protein localises to the cytoplasm. It catalyses the reaction [protein]-peptidylproline (omega=180) = [protein]-peptidylproline (omega=0). Involved in protein export. Acts as a chaperone by maintaining the newly synthesized protein in an open conformation. Functions as a peptidyl-prolyl cis-trans isomerase. The sequence is that of Trigger factor from Picosynechococcus sp. (strain ATCC 27264 / PCC 7002 / PR-6) (Agmenellum quadruplicatum).